Consider the following 215-residue polypeptide: MGKKVLLTGFDPFGGETVNPSWEAVKRLNGEEAEGVSIAAEQIPTVFHHSAAVLKKAIEKHKPDVVICAGQAGGRAHITPERIAINIDDARIPDNEDREPIDEPIAADGPAAYWSALPIKLIVKELRKNGIPASVSNSAGTFVCNHLFYQLMHRIDRTSANIRGGFIHIPFLPEQTIDKPEPSLSLETIVEGLRIAAVISALHEKDIRETGGSIS.

Active-site residues include Glu-81, Cys-144, and His-168.

This sequence belongs to the peptidase C15 family. Homotetramer.

The protein resides in the cytoplasm. The enzyme catalyses Release of an N-terminal pyroglutamyl group from a polypeptide, the second amino acid generally not being Pro.. Removes 5-oxoproline from various penultimate amino acid residues except L-proline. This Bacillus licheniformis (strain ATCC 14580 / DSM 13 / JCM 2505 / CCUG 7422 / NBRC 12200 / NCIMB 9375 / NCTC 10341 / NRRL NRS-1264 / Gibson 46) protein is Pyrrolidone-carboxylate peptidase.